Consider the following 570-residue polypeptide: Ferroportin (570 aa).

The Cytoplasmic portion of the chain corresponds to 1-23 (MTKSRDQTHQEGCCGSLANYLTS). The chain crosses the membrane as a helical span at residues 24 to 53 (AKFLLYLGHSLSTWGDRMWHFAVSVFLVEL). The Fe cation site is built by Asp39 and His43. Topologically, residues 54–57 (YGNS) are extracellular. The chain crosses the membrane as a helical span at residues 58–84 (LLLTAVYGLVVAGSVLVLGAIIGDWVD). Residues 85–87 (KNA) lie on the Cytoplasmic side of the membrane. The chain crosses the membrane as a helical span at residues 88–118 (RLKVAQTSLVVQNVSVILCGIILMMVFLHKN). At 119 to 126 (ELLNMYHG) the chain is on the extracellular side. Residues 127–162 (WVLTVCYILIITIANIANLASTATAITIQRDWIVVV) traverse the membrane as a helical segment. The Cytoplasmic segment spans residues 163–164 (AG). The chain crosses the membrane as a helical span at residues 165-195 (ENRSRLADMNATIRRIDQLTNILAPMAVGQI). The Extracellular segment spans residues 196-202 (MTFGSPV). Residues 203 to 229 (IGCGFISGWNLVSMCVEYFLLWKVYQK) traverse the membrane as a helical segment. Over 230–306 (TPALAVKAAL…DGWVSYYNQP (77 aa)) the chain is Cytoplasmic. A helical transmembrane segment spans residues 307-333 (VFLAGMGLAFLYMTVLGFDCITTGYAY). Cys326 lines the Fe cation pocket. At 334 to 338 (TQGLS) the chain is on the extracellular side. A helical transmembrane segment spans residues 339 to 366 (GSILSVLMGASAITGIMGTVAFTWLRRK). The Cytoplasmic segment spans residues 367-368 (CG). Residues 369–391 (LVRTGLFSGLAQLSCLILCVISV) traverse the membrane as a helical segment. Residues 392 to 452 (FMPGSPLDLS…EMSTKSVPII (61 aa)) lie on the Extracellular side of the membrane. A helical membrane pass occupies residues 453–482 (SVSLLFAGVIAARIGLWSFDLTVTQLLQEN). Over 483–487 (VIESE) the chain is Cytoplasmic. A helical transmembrane segment spans residues 488 to 512 (RGIINGVQNSMNYLLDLLHFIMVIL). His506 is a Fe cation binding site. Topologically, residues 513 to 515 (APN) are extracellular. The helical transmembrane segment at 516 to 541 (PEAFGLLVLISVSFVAMGHLMYFRFA) threads the bilayer. Over 542 to 570 (QKTLGNQIFVCAPDEKEVTDESQPNTSVV) the chain is Cytoplasmic.

This sequence belongs to the ferroportin (FP) (TC 2.A.100) family. SLC40A subfamily. Identified in a complex with STOM. Interacts with HAMP; affinity of the peptide hormone HAMP for SLC40A1 increases by 80-fold in the presence of iron and the interaction promotes SLC40A1 ubiquitination and degradation. Part of a complex composed of SLC40A1/ferroportin, TF/transferrin and HEPH/hephaestin that transfers iron from cells to transferrin. Polyubiquitinated by RNF217; leading to proteasomal degradation. Under conditions of high systemic iron levels, both the hormone peptide hepcidin/HAMP and holo(iron bound)-transferrin/TF induce the ubiquitination, internalization and proteasomal degradation of SLC40A1 to control iron release from cells.

It is found in the cell membrane. The protein localises to the basolateral cell membrane. The catalysed reaction is Fe(2+)(in) = Fe(2+)(out). With respect to regulation, during elevated serum iron levels, liver-derived hepcidin/HAMP negatively regulates cell surface SLC40A1 by inducing its ubiquitination, internalization, and degradation. Indeed, hepcidin/HAMP affinity towards ferroportin/SLC40A1 increases by 80-fold in the presence of iron. Functionally, transports Fe(2+) from the inside of a cell to the outside of the cell, playing a key role for maintaining systemic iron homeostasis. Transports iron from intestinal, splenic, hepatic cells, macrophages and erythrocytes into the blood to provide iron to other tissues. Controls therefore dietary iron uptake, iron recycling by macrophages and erythrocytes, and release of iron stores in hepatocytes. When iron is in excess in serum, circulating HAMP/hepcidin levels increase resulting in a degradation of SLC40A1, thus limiting the iron efflux to plasma. This chain is Ferroportin, found in Rattus norvegicus (Rat).